Consider the following 189-residue polypeptide: Xanthine phosphoribosyltransferase (189 aa).

Leu-20 and Asn-27 together coordinate xanthine. Residue 128-132 (ANGKA) participates in 5-phospho-alpha-D-ribose 1-diphosphate binding. Position 156 (Lys-156) interacts with xanthine.

It belongs to the purine/pyrimidine phosphoribosyltransferase family. Xpt subfamily. In terms of assembly, homodimer.

It is found in the cytoplasm. It catalyses the reaction XMP + diphosphate = xanthine + 5-phospho-alpha-D-ribose 1-diphosphate. The protein operates within purine metabolism; XMP biosynthesis via salvage pathway; XMP from xanthine: step 1/1. Its function is as follows. Converts the preformed base xanthine, a product of nucleic acid breakdown, to xanthosine 5'-monophosphate (XMP), so it can be reused for RNA or DNA synthesis. The sequence is that of Xanthine phosphoribosyltransferase from Pseudomonas savastanoi pv. phaseolicola (strain 1448A / Race 6) (Pseudomonas syringae pv. phaseolicola (strain 1448A / Race 6)).